Reading from the N-terminus, the 288-residue chain is Syntaxin-1A (288 aa).

Residues 1 to 265 (MKDRTQELRT…KYQSKARRKK (265 aa)) are Cytoplasmic-facing. Phosphoserine occurs at positions 14, 64, and 95. Residues 68–109 (DEKTKEELEELMSDIKKTANKVRSKLKSIEQSIEQEEGLNRS) adopt a coiled-coil conformation. The residue at position 188 (Ser188) is a Phosphoserine; by DAPK1. The t-SNARE coiled-coil homology domain occupies 192 to 254 (LSEIETRHSE…ERAVSDTKKA (63 aa)). Glycyl lysine isopeptide (Lys-Gly) (interchain with G-Cter in SUMO) cross-links involve residues Lys252, Lys253, and Lys256. Residues 266–286 (IMIIICCVIPGIVIASTVGGI) form a helical; Anchor for type IV membrane protein membrane-spanning segment. Residues 287-288 (FA) lie on the Extracellular side of the membrane.

Belongs to the syntaxin family. In terms of assembly, part of the SNARE core complex containing SNAP25, VAMP2 and STX1A; this complex constitutes the basic catalytic machinery of the complex neurotransmitter release apparatus. The SNARE complex interacts with CPLX1. Interacts with STXBP1. The interaction with STXBP1 promotes assembly of the SNARE complex. Interacts (via C-terminus) with KCNB1 (via C-terminus); the interaction increases in a calcium-dependent manner and induces a pore-independent enhancement of exocytosis in neuroendocrine cells, chromaffin cells, pancreatic beta cells and from the soma of dorsal root ganglia (DRG) neurons. Interacts with SYTL4. Interacts with STXBP6. Interacts with PLCL1 (via C2 domain). Interacts with OTOF. Interacts with LGI3. Interacts (via the H3 domain) with SLC6A4 (via the N-terminus); this interaction regulates SLC4A6 channel conductance in thalamocortical neurons. Interacts with SYT6 and SYT8; the interaction is Ca(2+)-dependent. Interacts with VAMP8. Interacts with SNAP23. Interacts with VAPA and SYBU. Interacts with PRRT2. Interacts with SEPT8. Interacts with STXBP5L. Interacts with synaptotagmin-1/SYT1. Interacts with SEPTIN5; in the cerebellar cortex. Interacts with SEPTIN4; in the striatum. Post-translationally, phosphorylated by CK2. Phosphorylation at Ser-188 by DAPK1 significantly decreases its interaction with STXBP1. In terms of processing, sumoylated, sumoylation is required for regulation of synaptic vesicle endocytosis.

Its subcellular location is the cytoplasmic vesicle. The protein resides in the secretory vesicle. It is found in the synaptic vesicle membrane. It localises to the cell membrane. The protein localises to the synapse. Its subcellular location is the synaptosome. Functionally, plays an essential role in hormone and neurotransmitter calcium-dependent exocytosis and endocytosis. Part of the SNARE (Soluble NSF Attachment Receptor) complex composed of SNAP25, STX1A and VAMP2 which mediates the fusion of synaptic vesicles with the presynaptic plasma membrane. STX1A and SNAP25 are localized on the plasma membrane while VAMP2 resides in synaptic vesicles. The pairing of the three SNAREs from the N-terminal SNARE motifs to the C-terminal anchors leads to the formation of the SNARE complex, which brings membranes into close proximity and results in final fusion. Participates in the calcium-dependent regulation of acrosomal exocytosis in sperm. Also plays an important role in the exocytosis of hormones such as insulin or glucagon-like peptide 1 (GLP-1). This Pongo abelii (Sumatran orangutan) protein is Syntaxin-1A (STX1A).